Reading from the N-terminus, the 100-residue chain is Proline-rich protein 15-like protein (100 aa).

Residues 26-100 (PDTYTQSEGG…LFDDREGKGQ (75 aa)) form a disordered region. A compositionally biased stretch (basic and acidic residues) spans 53–62 (RLEKIVDKNT).

Belongs to the PRR15 family.

This is Proline-rich protein 15-like protein (PRR15L) from Bos taurus (Bovine).